The following is a 271-amino-acid chain: ATP synthase subunit delta (271 aa).

This sequence belongs to the ATPase delta chain family. In terms of assembly, F-type ATPases have 2 components, F(1) - the catalytic core - and F(0) - the membrane proton channel. F(1) has five subunits: alpha(3), beta(3), gamma(1), delta(1), epsilon(1). F(0) has three main subunits: a(1), b(2) and c(10-14). The alpha and beta chains form an alternating ring which encloses part of the gamma chain. F(1) is attached to F(0) by a central stalk formed by the gamma and epsilon chains, while a peripheral stalk is formed by the delta and b chains.

The protein localises to the cell membrane. F(1)F(0) ATP synthase produces ATP from ADP in the presence of a proton or sodium gradient. F-type ATPases consist of two structural domains, F(1) containing the extramembraneous catalytic core and F(0) containing the membrane proton channel, linked together by a central stalk and a peripheral stalk. During catalysis, ATP synthesis in the catalytic domain of F(1) is coupled via a rotary mechanism of the central stalk subunits to proton translocation. Functionally, this protein is part of the stalk that links CF(0) to CF(1). It either transmits conformational changes from CF(0) to CF(1) or is implicated in proton conduction. This chain is ATP synthase subunit delta, found in Corynebacterium aurimucosum (strain ATCC 700975 / DSM 44827 / CIP 107346 / CN-1) (Corynebacterium nigricans).